The following is a 1088-amino-acid chain: RNA-directed RNA polymerase (1088 aa).

Positions 501–687 (LSYGDVTRFL…AKRYIAGGKI (187 aa)) constitute a RdRp catalytic domain.

The protein belongs to the reoviridae RNA-directed RNA polymerase family. As to quaternary structure, interacts with VP3 (Potential). Interacts with VP2; this interaction activates VP1. Interacts with NSP5; this interaction is probably necessary for the formation of functional virus factories. Interacts with NSP2; this interaction is weak. Mg(2+) is required as a cofactor.

The protein localises to the virion. It catalyses the reaction RNA(n) + a ribonucleoside 5'-triphosphate = RNA(n+1) + diphosphate. RNA-directed RNA polymerase that is involved in both transcription and genome replication. Together with VP3 capping enzyme, forms an enzyme complex positioned near the channels situated at each of the five-fold vertices of the core. Following infection, the outermost layer of the virus is lost, leaving a double-layered particle (DLP) made up of the core and VP6 shell. VP1 then catalyzes the transcription of fully conservative plus-strand genomic RNAs that are extruded through the DLP's channels into the cytoplasm where they function as mRNAs for translation of viral proteins. One copy of each of the viral (+)RNAs is also recruited during core assembly, together with newly synthesized polymerase complexes and VP2. The polymerase of these novo-formed particles catalyzes the synthesis of complementary minus-strands leading to dsRNA formation. To do so, the polymerase specifically recognizes and binds 4 bases 5'-UGUG-3' in the conserved 3'-sequence of plus-strand RNA templates. VP2 presumably activates the autoinhibited VP1-RNA complex to coordinate packaging and genome replication. Once dsRNA synthesis is complete, the polymerase switches to the transcriptional mode, thus providing secondary transcription. This chain is RNA-directed RNA polymerase, found in Sus scrofa (Pig).